The following is a 513-amino-acid chain: Xylose import ATP-binding protein XylG (513 aa).

2 ABC transporter domains span residues 5-242 (LEMK…VGRE) and 259-505 (LRVE…LRSE). 37–44 (GENGSGKS) provides a ligand contact to ATP.

This sequence belongs to the ABC transporter superfamily. Xylose importer (TC 3.A.1.2.4) family. The complex is composed of two ATP-binding proteins (XylG), two transmembrane proteins (XylH) and a solute-binding protein (XylF).

It is found in the cell inner membrane. The enzyme catalyses D-xylose(out) + ATP + H2O = D-xylose(in) + ADP + phosphate + H(+). In terms of biological role, part of the ABC transporter complex XylFGH involved in xylose import. Responsible for energy coupling to the transport system. In Pectobacterium atrosepticum (strain SCRI 1043 / ATCC BAA-672) (Erwinia carotovora subsp. atroseptica), this protein is Xylose import ATP-binding protein XylG.